Here is a 165-residue protein sequence, read N- to C-terminus: MRKSASAVAVLALIACGSAHAAGFVGNKAVVQAAVTIAAQNTTSANWSQDPGFTGPAVAAGQKVGTLSITATGPHNSVSIAGKGASVSGGVATVPFVDGQGQPVFRGRIQGANINDQANTGIDGLAGWRVASSQETLNVPVTTFGKSTLPAGTFTATFYVQQYQN.

The signal sequence occupies residues 1 to 21 (MRKSASAVAVLALIACGSAHA).

It is found in the fimbrium. Structural subunit of the sef14 fimbriae. This is Fimbrial protein (sefA) from Salmonella enteritidis.